Here is an 87-residue protein sequence, read N- to C-terminus: DNA-directed RNA polymerase subunit omega (87 aa).

It belongs to the RNA polymerase subunit omega family. As to quaternary structure, the RNAP catalytic core consists of 2 alpha, 1 beta, 1 beta' and 1 omega subunit. When a sigma factor is associated with the core the holoenzyme is formed, which can initiate transcription.

The enzyme catalyses RNA(n) + a ribonucleoside 5'-triphosphate = RNA(n+1) + diphosphate. In terms of biological role, promotes RNA polymerase assembly. Latches the N- and C-terminal regions of the beta' subunit thereby facilitating its interaction with the beta and alpha subunits. The protein is DNA-directed RNA polymerase subunit omega of Pseudomonas fluorescens (strain ATCC BAA-477 / NRRL B-23932 / Pf-5).